The following is a 283-amino-acid chain: 4-diphosphocytidyl-2-C-methyl-D-erythritol kinase (283 aa).

Residue lysine 10 is part of the active site. 99-109 (PMGGGLGGGSS) contacts ATP. Residue aspartate 141 is part of the active site.

Belongs to the GHMP kinase family. IspE subfamily. As to quaternary structure, homodimer.

The catalysed reaction is 4-CDP-2-C-methyl-D-erythritol + ATP = 4-CDP-2-C-methyl-D-erythritol 2-phosphate + ADP + H(+). It functions in the pathway isoprenoid biosynthesis; isopentenyl diphosphate biosynthesis via DXP pathway; isopentenyl diphosphate from 1-deoxy-D-xylulose 5-phosphate: step 3/6. Catalyzes the phosphorylation of the position 2 hydroxy group of 4-diphosphocytidyl-2C-methyl-D-erythritol. The polypeptide is 4-diphosphocytidyl-2-C-methyl-D-erythritol kinase (Salmonella gallinarum (strain 287/91 / NCTC 13346)).